The chain runs to 190 residues: Membrane protein FAM174A (190 aa).

Positions 1–29 (MPTRRGCSGPCHFLASAFVLLLLPALNQS) are cleaved as a signal peptide. Residues Asn-27 and Asn-83 are each glycosylated (N-linked (GlcNAc...) asparagine). Residues 30–123 (VVLPSTVPRA…NPSDKPMTQR (94 aa)) are Extracellular-facing. A disordered region spans residues 37-119 (PRAVQESKPL…AVSPNPSDKP (83 aa)). The helical transmembrane segment at 124–144 (ALTVLVVVSAAVLVYFVVRTV) threads the bilayer. Residues 145 to 190 (RMRRRNRKTRRYGVLDTNIENMELTPLEQDDEDDDNTLFDANHPRR) lie on the Cytoplasmic side of the membrane. A disordered region spans residues 168–190 (LTPLEQDDEDDDNTLFDANHPRR). Residues 172–181 (EQDDEDDDNT) are compositionally biased toward acidic residues.

Belongs to the FAM174 family.

It localises to the membrane. The chain is Membrane protein FAM174A (Fam174a) from Rattus norvegicus (Rat).